Here is a 238-residue protein sequence, read N- to C-terminus: Gem-associated protein 8 (238 aa).

The segment at 66–127 (AGHPWDSQGQ…LESDSDDEVE (62 aa)) is disordered. Polar residues-rich tracts occupy residues 72–82 (SQGQHMAQQES) and 96–108 (LRNSSRTQASTRG). Residues 113–127 (CEEEELESDSDDEVE) show a composition bias toward acidic residues. Position 122 is a phosphoserine (Ser-122). Positions 131–164 (SNMEITEELRQYFAQTERHREERRRQQQLDAERL) form a coiled coil.

As to quaternary structure, part of the core SMN complex that contains SMN1, GEMIN2/SIP1, DDX20/GEMIN3, GEMIN4, GEMIN5, GEMIN6, GEMIN7, GEMIN8 and STRAP/UNRIP. Part of the SMN-Sm complex that contains SMN1, GEMIN2/SIP1, DDX20/GEMIN3, GEMIN4, GEMIN5, GEMIN6, GEMIN7, GEMIN8, STRAP/UNRIP and the Sm proteins SNRPB, SNRPD1, SNRPD2, SNRPD3, SNRPE, SNRPF and SNRPG. Interacts with GEMIN6; the interaction is direct. Interacts with GEMIN7; the interaction is direct. Interacts with SMN1; the interaction is direct. Interacts with GEMIN4; the interaction is direct. As to expression, widely expressed in embryonic tissues (at protein level).

The protein localises to the nucleus. Its subcellular location is the gem. The protein resides in the cytoplasm. Its function is as follows. The SMN complex catalyzes the assembly of small nuclear ribonucleoproteins (snRNPs), the building blocks of the spliceosome, and thereby plays an important role in the splicing of cellular pre-mRNAs. Most spliceosomal snRNPs contain a common set of Sm proteins SNRPB, SNRPD1, SNRPD2, SNRPD3, SNRPE, SNRPF and SNRPG that assemble in a heptameric protein ring on the Sm site of the small nuclear RNA to form the core snRNP (Sm core). In the cytosol, the Sm proteins SNRPD1, SNRPD2, SNRPE, SNRPF and SNRPG are trapped in an inactive 6S pICln-Sm complex by the chaperone CLNS1A that controls the assembly of the core snRNP. To assemble core snRNPs, the SMN complex accepts the trapped 5Sm proteins from CLNS1A forming an intermediate. Binding of snRNA inside 5Sm triggers eviction of the SMN complex, thereby allowing binding of SNRPD3 and SNRPB to complete assembly of the core snRNP. The protein is Gem-associated protein 8 (Gemin8) of Mus musculus (Mouse).